The sequence spans 459 residues: Cysteine--tRNA ligase (459 aa).

Residue Cys28 participates in Zn(2+) binding. The 'HIGH' region motif lies at Val30 to His40. Residues Cys209, His234, and Glu238 each coordinate Zn(2+). The short motif at Lys266 to Ser270 is the 'KMSKS' region element. Lys269 provides a ligand contact to ATP.

Belongs to the class-I aminoacyl-tRNA synthetase family. As to quaternary structure, monomer. It depends on Zn(2+) as a cofactor.

It localises to the cytoplasm. The catalysed reaction is tRNA(Cys) + L-cysteine + ATP = L-cysteinyl-tRNA(Cys) + AMP + diphosphate. This chain is Cysteine--tRNA ligase, found in Shewanella baltica (strain OS195).